Consider the following 357-residue polypeptide: Uroporphyrinogen decarboxylase (357 aa).

Substrate contacts are provided by residues 27-31 (RQAGR), D77, Y154, S209, and H330.

Belongs to the uroporphyrinogen decarboxylase family. Homodimer.

The protein resides in the cytoplasm. It catalyses the reaction uroporphyrinogen III + 4 H(+) = coproporphyrinogen III + 4 CO2. It functions in the pathway porphyrin-containing compound metabolism; protoporphyrin-IX biosynthesis; coproporphyrinogen-III from 5-aminolevulinate: step 4/4. In terms of biological role, catalyzes the decarboxylation of four acetate groups of uroporphyrinogen-III to yield coproporphyrinogen-III. The protein is Uroporphyrinogen decarboxylase of Acinetobacter baumannii (strain ACICU).